A 265-amino-acid chain; its full sequence is Uridylate kinase (265 aa).

A disordered region spans residues 1–29; it reads MTESREPHVAGSAAPRPEPANGLASGQPS. ATP is bound at residue 40–43; sequence KLGG. Glycine 81 lines the UMP pocket. ATP contacts are provided by glycine 82 and arginine 86. Residues aspartate 101 and 162-169 contribute to the UMP site; that span reads MGLPYFST. 2 residues coordinate ATP: phenylalanine 195 and aspartate 198.

It belongs to the UMP kinase family. Homohexamer.

It is found in the cytoplasm. The catalysed reaction is UMP + ATP = UDP + ADP. Its pathway is pyrimidine metabolism; CTP biosynthesis via de novo pathway; UDP from UMP (UMPK route): step 1/1. Its activity is regulated as follows. Inhibited by UTP. Its function is as follows. Catalyzes the reversible phosphorylation of UMP to UDP. The sequence is that of Uridylate kinase from Mycolicibacterium paratuberculosis (strain ATCC BAA-968 / K-10) (Mycobacterium paratuberculosis).